Consider the following 205-residue polypeptide: MNCRVKICGITNLDDAMVACRYGADALGFVFYEKSPRYVAPDMANAIVAQLPPFIIPVALFVDADTSLVNSVISGSSRWTIQFHGSESESECISYQRPYIKALRIQRGDDVAALVDQYPSASAMLLDAYKAGVPGGTGEVFDWSLIPIGLSKPIVLAGGLTPSNVKQAIKQVKPYAVDVSGGVELSKGIKSEPLVQEFISGAKCG.

Belongs to the TrpF family.

The enzyme catalyses N-(5-phospho-beta-D-ribosyl)anthranilate = 1-(2-carboxyphenylamino)-1-deoxy-D-ribulose 5-phosphate. The protein operates within amino-acid biosynthesis; L-tryptophan biosynthesis; L-tryptophan from chorismate: step 3/5. The protein is N-(5'-phosphoribosyl)anthranilate isomerase of Marinomonas sp. (strain MWYL1).